The chain runs to 579 residues: Putative diflavin flavoprotein A 2 (579 aa).

The segment at Gln-50–His-243 is zinc metallo-hydrolase. Residues His-99, Glu-101, Asp-103, His-166, Asp-185, and His-243 each contribute to the Fe cation site. In terms of domain architecture, Flavodoxin-like spans Val-272–Ser-460. Residues Leu-461–Tyr-579 are flavodoxin-reductase-like.

The protein in the N-terminal section; belongs to the zinc metallo-hydrolase group 3 family. This sequence in the C-terminal section; belongs to the flavodoxin reductase family. Fe cation serves as cofactor.

Mediates electron transfer from NADH to oxygen, reducing it to water. This modular protein has 3 redox cofactors, in other organisms the same activity requires 2 or 3 proteins. This Nostoc sp. (strain PCC 7120 / SAG 25.82 / UTEX 2576) protein is Putative diflavin flavoprotein A 2 (dfa2).